The chain runs to 318 residues: Aldo-keto reductase family 1 member C21 (318 aa).

20–24 is an NADP(+) binding site; the sequence is GFGTA. Position 31 (K31) interacts with substrate. An NADP(+)-binding site is contributed by D50. Y55 functions as the Proton donor in the catalytic mechanism. H117 serves as a coordination point for substrate. NADP(+) contacts are provided by residues 166-167, Q190, 216-224, and 270-280; these read SN, YGVLGTQRY, and TSLKEERIKEN.

It belongs to the aldo/keto reductase family. As to quaternary structure, monomer.

It localises to the cytoplasm. It carries out the reaction androsterone + NADP(+) = 5alpha-androstan-3,17-dione + NADPH + H(+). It catalyses the reaction androsterone + NAD(+) = 5alpha-androstan-3,17-dione + NADH + H(+). In terms of biological role, NADP-dependent 17-alpha-hydroxysteroid dehydrogenase that converts 5-alpha-androstane-3,17-dione into androsterone. Has lower 3-alpha-hydroxysteroid dehydrogenase activity. Has broad substrate specificity and acts on various 17-alpha-hydroxysteroids, 17-ketosteroids, 3-alpha hydroxysteroids and 3-ketosteroids. Reduction of keto groups is strictly stereoselective. Reduction of 17-ketosteroids yields only 17-alpha-hydroxysteroids. Likewise, reduction of 3-ketosteroids yields only 3-alpha-hydroxysteroids. The protein is Aldo-keto reductase family 1 member C21 (Akr1c21) of Rattus norvegicus (Rat).